The primary structure comprises 120 residues: NAD(P)H-quinone oxidoreductase subunit 3, chloroplastic (120 aa).

Helical transmembrane passes span valine 11–isoleucine 31, phenylalanine 65–valine 85, and leucine 89–valine 109.

It belongs to the complex I subunit 3 family. As to quaternary structure, NDH is composed of at least 16 different subunits, 5 of which are encoded in the nucleus.

Its subcellular location is the plastid. The protein resides in the chloroplast thylakoid membrane. The enzyme catalyses a plastoquinone + NADH + (n+1) H(+)(in) = a plastoquinol + NAD(+) + n H(+)(out). It catalyses the reaction a plastoquinone + NADPH + (n+1) H(+)(in) = a plastoquinol + NADP(+) + n H(+)(out). NDH shuttles electrons from NAD(P)H:plastoquinone, via FMN and iron-sulfur (Fe-S) centers, to quinones in the photosynthetic chain and possibly in a chloroplast respiratory chain. The immediate electron acceptor for the enzyme in this species is believed to be plastoquinone. Couples the redox reaction to proton translocation, and thus conserves the redox energy in a proton gradient. The protein is NAD(P)H-quinone oxidoreductase subunit 3, chloroplastic of Mesostigma viride (Green alga).